The sequence spans 380 residues: F-box/kelch-repeat protein At3g18720 (380 aa).

Residues 47 to 94 enclose the F-box domain; that stretch reads LWDKQIPTDLLQEILSRLGLKANIHASLVCKTWLKEAVSVRKFQSRPW. Kelch repeat units follow at residues 190–233 and 234–279; these read CVIS…INRC and IFSN…LVRQ.

The chain is F-box/kelch-repeat protein At3g18720 from Arabidopsis thaliana (Mouse-ear cress).